A 242-amino-acid chain; its full sequence is Coat protein (242 aa).

Over residues 1 to 16 (MGDQPRPPVPPAPGSN) the composition is skewed to pro residues. 2 disordered regions span residues 1–41 (MGDQ…VANQ) and 219–242 (SNSTLLTKGASRSTPPALLPGPDA). The span at 219 to 232 (SNSTLLTKGASRST) shows a compositional bias: polar residues.

The protein belongs to the potexvirus capsid protein family.

It localises to the virion. Functionally, required for genome encapsidation. Forms ribonucleoprotein complexes along with TGB1 helicase and viral RNA. The protein is Coat protein of Strawberry mild yellow edge-associated virus (SMYEaV).